Here is a 308-residue protein sequence, read N- to C-terminus: Pyrroline-5-carboxylate reductase 3 (308 aa).

This sequence belongs to the pyrroline-5-carboxylate reductase family. As to quaternary structure, homodecamer; composed of 5 homodimers.

The protein localises to the cytoplasm. The enzyme catalyses L-proline + NADP(+) = (S)-1-pyrroline-5-carboxylate + NADPH + 2 H(+). The catalysed reaction is L-proline + NAD(+) = (S)-1-pyrroline-5-carboxylate + NADH + 2 H(+). Its pathway is amino-acid biosynthesis; L-proline biosynthesis; L-proline from L-glutamate 5-semialdehyde: step 1/1. Functionally, oxidoreductase that catalyzes the last step in proline biosynthesis, which corresponds to the reduction of pyrroline-5-carboxylate (P5C) to L-proline using NAD(P)H. Proline is synthesized from either glutamate or ornithine; both are converted to P5C, and then to proline via pyrroline-5-carboxylate reductases (PYCRs). PYCR3 is exclusively linked to the biosynthesis of proline from ornithine. The chain is Pyrroline-5-carboxylate reductase 3 from Bos taurus (Bovine).